The primary structure comprises 1294 residues: uncharacterized protein (1294 aa).

Topologically, residues 1 to 375 (MSQQENGDVA…RNFKLNFSDY (375 aa)) are extracellular. The ABC transporter 1 domain occupies 28 to 287 (LHVRDLSIVA…FESIGYHVPQ (260 aa)). A glycan (N-linked (GlcNAc...) asparagine) is linked at Asn41. 62–69 (GGSGSGKT) serves as a coordination point for ATP. 6 N-linked (GlcNAc...) asparagine glycosylation sites follow: Asn86, Asn101, Asn151, Asn341, Asn349, and Asn371. A helical transmembrane segment spans residues 376–396 (VTLISTFAEPLIIGTVCGWIY). The Cytoplasmic portion of the chain corresponds to 397–495 (YKPDKSSIGG…EADARKFFYQ (99 aa)). A helical transmembrane segment spans residues 496–516 (FAVVFLCQLSCSGLSMLSVAV). Residues 517–530 (SRDFSKASLVGNMT) lie on the Extracellular side of the membrane. Asn528 carries N-linked (GlcNAc...) asparagine glycosylation. A helical membrane pass occupies residues 531–551 (FTVLSMGCGFFVNAKVMPVYV). At 552-604 (RWIKYIAFTWYSFGTLMSSTFTNSYCTTDNLDECLGNQILEVYGFPRNWITVP) the chain is on the cytoplasmic side. A helical membrane pass occupies residues 605–625 (AVVLLCWSVGYFVVGAIILYL). Over 626-1038 (HKIDITLQNE…TTTRRSFDSL (413 aa)) the chain is Extracellular. The ABC transporter 2 domain maps to 679 to 941 (IKLEDIDLRV…FTELGYNCPS (263 aa)). 727-734 (GPSGSGKS) is a binding site for ATP. Asn983 carries N-linked (GlcNAc...) asparagine glycosylation. The helical transmembrane segment at 1039–1059 (MARIAQIPGLGVIFALFFAPV) threads the bilayer. The Cytoplasmic portion of the chain corresponds to 1060-1120 (KHNYTSISNR…PFFLAYMTLE (61 aa)). Residues 1121 to 1141 (LPLSALASVLYAVFTVLACGL) traverse the membrane as a helical segment. The Extracellular segment spans residues 1142-1266 (PRTAGNFFAT…YGLVRNTQKY (125 aa)). A helical transmembrane segment spans residues 1267-1287 (LGIIVCVAIIYRLIAFFILKA). The Cytoplasmic portion of the chain corresponds to 1288–1294 (KLEWIKW).

This sequence belongs to the ABC transporter superfamily. ABCG family. PDR (TC 3.A.1.205) subfamily.

It is found in the membrane. This is an uncharacterized protein from Saccharomyces cerevisiae (strain ATCC 204508 / S288c) (Baker's yeast).